Consider the following 58-residue polypeptide: Small ribosomal subunit protein bS21 (58 aa).

It belongs to the bacterial ribosomal protein bS21 family.

The polypeptide is Small ribosomal subunit protein bS21 (Prochlorococcus marinus (strain MIT 9301)).